The following is a 430-amino-acid chain: Corticosteroid-binding globulin (430 aa).

Positions 1 to 22 (MLLTLYTCLLWLSTSGLWTIQA) are cleaved as a signal peptide. 3 N-linked (GlcNAc...) asparagine glycosylation sites follow: Asn-119, Asn-175, and Asn-243. Gln-253 contributes to the cortisol binding site. The N-linked (GlcNAc...) asparagine glycan is linked to Asn-259. A cortisol-binding site is contributed by Gln-285. N-linked (GlcNAc...) asparagine glycosylation occurs at Asn-326. Trp-392 contributes to the cortisol binding site.

Belongs to the serpin family. As to expression, expressed by the liver; secreted in plasma.

Its subcellular location is the secreted. Its function is as follows. Major transport protein for glucocorticoids and progestins in the blood of almost all vertebrate species. The chain is Corticosteroid-binding globulin (SERPINA6) from Ovis aries (Sheep).